The sequence spans 114 residues: T cell receptor beta variable 4-3 (114 aa).

The signal sequence occupies residues Met1 to Thr21. The 93-residue stretch at Gly22–Gln114 folds into the Ig-like domain. Residues Cys42 and Cys110 are joined by a disulfide bond. N-linked (GlcNAc...) asparagine glycans are attached at residues Asn76 and Asn89.

In terms of assembly, alpha-beta TR is a heterodimer composed of an alpha and beta chain; disulfide-linked. The alpha-beta TR is associated with the transmembrane signaling CD3 coreceptor proteins to form the TR-CD3 (TcR or TCR). The assembly of alpha-beta TR heterodimers with CD3 occurs in the endoplasmic reticulum where a single alpha-beta TR heterodimer associates with one CD3D-CD3E heterodimer, one CD3G-CD3E heterodimer and one CD247 homodimer forming a stable octameric structure. CD3D-CD3E and CD3G-CD3E heterodimers preferentially associate with TR alpha and TR beta chains, respectively. The association of the CD247 homodimer is the last step of TcR assembly in the endoplasmic reticulum and is required for transport to the cell surface.

The protein resides in the cell membrane. V region of the variable domain of T cell receptor (TR) beta chain that participates in the antigen recognition. Alpha-beta T cell receptors are antigen specific receptors which are essential to the immune response and are present on the cell surface of T lymphocytes. Recognize peptide-major histocompatibility (MH) (pMH) complexes that are displayed by antigen presenting cells (APC), a prerequisite for efficient T cell adaptive immunity against pathogens. Binding of alpha-beta TR to pMH complex initiates TR-CD3 clustering on the cell surface and intracellular activation of LCK that phosphorylates the ITAM motifs of CD3G, CD3D, CD3E and CD247 enabling the recruitment of ZAP70. In turn ZAP70 phosphorylates LAT, which recruits numerous signaling molecules to form the LAT signalosome. The LAT signalosome propagates signal branching to three major signaling pathways, the calcium, the mitogen-activated protein kinase (MAPK) kinase and the nuclear factor NF-kappa-B (NF-kB) pathways, leading to the mobilization of transcription factors that are critical for gene expression and essential for T cell growth and differentiation. The T cell repertoire is generated in the thymus, by V-(D)-J rearrangement. This repertoire is then shaped by intrathymic selection events to generate a peripheral T cell pool of self-MH restricted, non-autoaggressive T cells. Post-thymic interaction of alpha-beta TR with the pMH complexes shapes TR structural and functional avidity. The chain is T cell receptor beta variable 4-3 from Homo sapiens (Human).